The following is a 567-amino-acid chain: Glucose-6-phosphate isomerase, cytosolic A (567 aa).

D-glucose 6-phosphate is bound by residues 156–157, 212–217, Gln356, Glu360, His391, and Lys516; these read GS and SKTFTT. Glu360 (proton donor) is an active-site residue. Catalysis depends on residues His391 and Lys516.

It belongs to the GPI family. Homodimer.

The protein localises to the cytoplasm. It catalyses the reaction alpha-D-glucose 6-phosphate = beta-D-fructose 6-phosphate. It participates in carbohydrate degradation; glycolysis; D-glyceraldehyde 3-phosphate and glycerone phosphate from D-glucose: step 2/4. Its function is as follows. Catalyzes the conversion of glucose-6-phosphate to fructose-6-phosphate, the second step in glycolysis, and the reverse reaction during gluconeogenesis. The protein is Glucose-6-phosphate isomerase, cytosolic A of Oryza sativa subsp. japonica (Rice).